The chain runs to 126 residues: Urease subunit beta (126 aa).

Belongs to the urease beta subunit family. Heterotrimer of UreA (gamma), UreB (beta) and UreC (alpha) subunits. Three heterotrimers associate to form the active enzyme.

It is found in the cytoplasm. The enzyme catalyses urea + 2 H2O + H(+) = hydrogencarbonate + 2 NH4(+). It functions in the pathway nitrogen metabolism; urea degradation; CO(2) and NH(3) from urea (urease route): step 1/1. This is Urease subunit beta from Haloquadratum walsbyi (strain DSM 16790 / HBSQ001).